The following is a 523-amino-acid chain: MAVSKNIKSNVSTHVTKKATKKTTNNGEESKTVKKAVNNKLLSDEINEILHSSENIKKSIDPESMDYFGDSAKVSKSDENFGEIEDDNRGTRLKGDIPTEFTSGKYSGKKSSRKDNDMEEDDELDQDNEYDIFGGDKQDDDDGDDDNSEDLDDAFDFQDKQDDDDDDDDKEDDDEDDDDDENVVVSSNIDRADMLFKKLQKQEKEEEKQPKLVGHTNEADEMEKAQNTKNQTALYNEFLTTRILLQKTINCANKLPKPKIYKEFLELNDESLQKKFKETKTASCLLISELYNLQSELIDLNDEIPKQQQSKKRIRPDQSLSEIWNTIEEQNQRLDQFHNQTITKWNNRISVTSSINSGGKGGNNLKSLNQSILSQIQNTLNDFERLQKRTKLKRTTYRIIGEKQQQLSSANSIDQNEEEKDEYDDEIFDDTDFYQTLLKDLEANNSEENEVGSQYWIEMRNLKKKKKKKVNQKASKGRILRYEVFPKLENFMTPQSLPIPDWNIDQLYQNLFGGLGNVNINLN.

Over residues M1–H14 the composition is skewed to polar residues. Disordered stretches follow at residues M1–A36, H51–S187, and Q200–K224. Basic and acidic residues predominate over residues D87–I97. 2 stretches are compositionally biased toward acidic residues: residues D117–Y130 and Q138–N182. Basic and acidic residues predominate over residues Q200–P210.

Belongs to the AATF family.

This is an uncharacterized protein from Dictyostelium discoideum (Social amoeba).